The following is a 2391-amino-acid chain: Filaggrin-2 (2391 aa).

The segment at 1–81 (MTDLLRSVVT…TEFLLMIFKL (81 aa)) is S-100-like. 2 consecutive EF-hand domains span residues 8–43 (VVTV…ELHP) and 49–84 (DDPD…LTMA). Positions 62, 64, 66, 68, and 73 each coordinate Ca(2+). Disordered regions lie at residues 96 to 275 (ASGS…DSGR), 349 to 369 (SYSQ…CGGQ), and 406 to 2391 (NSSS…LSRH). The span at 98 to 107 (GSKKHRRGHR) shows a compositional bias: basic residues. The span at 111 to 121 (EESETEEDEED) shows a compositional bias: acidic residues. Basic residues predominate over residues 149 to 163 (GTVKCRHGSNSRRLG). A compositionally biased stretch (polar residues) spans 166 to 176 (GNLSSSGNQEG). A compositionally biased stretch (basic and acidic residues) spans 193 to 209 (GKDRHGSSSVELRERIN). One copy of the Filaggrin 1 repeat lies at 245 to 289 (ETSGHESNSTQSRIREQKLGSSCSGSGDSGRRSHACGYSNSSGCG). 2 stretches are compositionally biased toward polar residues: residues 420 to 442 (GSGS…SSGF) and 449 to 476 (SGQT…SGKT). The stretch at 421–466 (SGSSQSTSFEQHGTGLSQSSGFEQHVCGSGQTCGQHESTSSQSLGY) is one Filaggrin 2 repeat. Residues 480 to 507 (GQHGSGSGQSSGFGQCGSGSGQSSGFGQ) show a composition bias toward gly residues. A compositionally biased stretch (low complexity) spans 508 to 562 (HGSVSGQSSGFGQHGSVSGQSSGFGQHESRSRQSSYGQHGSGSSQSSGYGQYGSR). Positions 568–604 (GQHGLGSGQSTGFGQYGSGSGQSSGFGQHGSGSGQSS) are enriched in gly residues. Residues 605 to 655 (GFGQHESRSGQSSYGQHSSGSSQSSGYGQHGSRQTSGFGQHGSGSSQSTGF) show a composition bias toward low complexity. Residues 656–666 (GQYGSGSGQSS) are compositionally biased toward gly residues. Low complexity predominate over residues 667–734 (GFGQHVSGSG…SSGQSSSFGQ (68 aa)). The segment covering 735-756 (HGSGSGQSSGFGQHGSGSGQSS) has biased composition (gly residues). The span at 757 to 807 (GFGQHESRSGQSSYGQHSSGSSQSSGYGQHGSRQTSGFGQHGSGSSQSTGF) shows a compositional bias: low complexity. The span at 808-831 (GQYGSGSGQSAGFGQHGSGSGQSS) shows a compositional bias: gly residues. The span at 832 to 884 (GFGQHESRSHQSSYGQHGSGSSQSSGYGQHGSSSGQTSGFGQHRSSSGQYSGF) shows a compositional bias: low complexity. The span at 885–908 (GQHGSGSGQSSGFGQHGTGSGQYS) shows a compositional bias: gly residues. Residues 918–956 (HQSSYGQHGSGSSQSSGYGQHGSSSGQTFGFGQHRSGSG) show a composition bias toward low complexity. The span at 957–972 (QSSGFGQHGSGSGQSS) shows a compositional bias: gly residues. Composition is skewed to low complexity over residues 973 to 982 (GFGQHESGSG) and 994 to 1027 (SSQS…GFGQ). A Filaggrin 3 repeat occupies 1019-1051 (SGQTTGFGQHRSSSGQYSGFGQHGSGSDQSSGF). The segment covering 1052–1062 (GQHGTGSGQSS) has biased composition (gly residues). Residues 1063–1098 (GFGQYESRSRQSSYGQHGSGSSQSSGYGQHGSNSGQ) are compositionally biased toward low complexity. One copy of the Filaggrin 4 repeat lies at 1097-1141 (GQTSGFGQHRPGSGQSSGFGQYGSGSGQSSGFGQHGSGTGKSSGF). Residues 1111-1137 (QSSGFGQYGSGSGQSSGFGQHGSGTGK) show a composition bias toward gly residues. Positions 1148-1174 (SGQSSYGQHGTGSSQSSGCGQHESGSG) are enriched in low complexity. The segment covering 1175–1198 (PTTSFGQHVSGSDNFSSSGQHISD) has biased composition (polar residues). The span at 1206-1220 (GQYGSGSGQSTGLGQ) shows a compositional bias: gly residues. Over residues 1226-1249 (VESGSTVHGRQETTHGQTINTTRH) the composition is skewed to polar residues. Positions 1250–1263 (SQSGQGQSTQTGSR) are enriched in low complexity. Ser1276 bears the Phosphoserine mark. Polar residues predominate over residues 1329-1343 (HGQSTQTGSRTSGRQ). Residues 1346-1355 (SHSDATDSEV) are compositionally biased toward basic and acidic residues. Polar residues predominate over residues 1366-1377 (QEQTHSQAGSQH). Basic and acidic residues predominate over residues 1378–1390 (GESESTVHERHET). Positions 1406–1416 (HGQSTQRGSRT) are enriched in low complexity. Phosphoserine is present on residues Ser1427 and Ser1428. Residues 1439–1459 (RPQSQEQTHGQAGSQHGESGS) show a composition bias toward polar residues. Residues 1455–1510 (GESGSTVHGRHGTTHGQTGDTTRHAHYHHGKSTQRGSSTTGRRGSGHSESSDSEVH) form a Filaggrin 5 repeat. Low complexity predominate over residues 1487–1496 (TQRGSSTTGR). Phosphoserine is present on residues Ser1504 and Ser1505. Residues 1510–1529 (HSGGSHTHSGHTHGQSGSQH) show a composition bias toward low complexity. The segment covering 1544-1559 (HGQTGDTTRHSYSGHE) has biased composition (polar residues). The span at 1560 to 1572 (QTTQTGSRTTGRQ) shows a compositional bias: low complexity. 2 stretches are compositionally biased toward basic and acidic residues: residues 1575–1584 (SHSESTDSEV) and 1605–1618 (QHEE…ERHG). A Phosphoserine modification is found at Ser1579. The stretch at 1607–1662 (EEPEFTVHERHGTTHGQIGDTTGHSHSGHGQSTQRGSRTTGRQRSSHSESSDSEVH) is one Filaggrin 6 repeat. The segment covering 1627–1649 (TTGHSHSGHGQSTQRGSRTTGRQ) has biased composition (low complexity). Residues 1652 to 1661 (SHSESSDSEV) are compositionally biased toward basic and acidic residues. 2 positions are modified to phosphoserine: Ser1656 and Ser1657. 2 stretches are compositionally biased toward low complexity: residues 1662-1686 (HSGV…QSES) and 1711-1720 (GLTTQTGSRT). Basic and acidic residues predominate over residues 1755 to 1768 (QHGESESIVHERHG). The stretch at 1757–1812 (GESESIVHERHGTIHGQTGDTTRHAHSGHGQSTQTGSRTTGRRSSGHSEYSDSEGH) is one Filaggrin 7 repeat. Residues 1784–1795 (GHGQSTQTGSRT) show a composition bias toward low complexity. Residues Ser1800 and Ser1807 each carry the phosphoserine modification. A compositionally biased stretch (basic and acidic residues) spans 1834 to 1845 (GESESIVDERHG). The segment covering 1849 to 1873 (GQTGDTSGHSQSGHGQSTQSGSSTT) has biased composition (low complexity). A compositionally biased stretch (basic and acidic residues) spans 1879–1888 (GHSESSDSEV). 3 positions are modified to phosphoserine: Ser1883, Ser1884, and Ser1959. Filaggrin repeat units follow at residues 1928-1964 (DTTE…SEGP) and 1984-2039 (PESG…SEGH). 2 stretches are compositionally biased toward low complexity: residues 1963-1982 (GPSG…AGSH) and 2013-2022 (GQSTQRGSRT). Residue Ser2034 is modified to Phosphoserine. 3 stretches are compositionally biased toward low complexity: residues 2039–2059 (HSGV…SQHG), 2114–2125 (HSGVSHTHSGHT), and 2162–2176 (HGQS…TGRQ). One copy of the Filaggrin 10 repeat lies at 2134–2189 (GESGSAIHGRQGTIHGQTGDTTRHGQSGHGQSTQTGSRTTGRQRSSHSESSDSEVH). A compositionally biased stretch (basic and acidic residues) spans 2179–2190 (SHSESSDSEVHS). Low complexity-rich tracts occupy residues 2201 to 2211 (HSQAGSRHGQS), 2219 to 2228 (QGTTHGQTGD), and 2238 to 2247 (GQSTQRGSRT). Polar residues predominate over residues 2273–2288 (GHIQGQAGSQQRQPGS). Positions 2320–2331 (SRSSRASHFQSH) are enriched in low complexity. The segment covering 2367–2391 (SRKSISNSHLSWSTDSTANKQLSRH) has biased composition (polar residues).

Belongs to the S100-fused protein family. The protein in the N-terminal section; belongs to the S-100 family. In terms of processing, deiminated by PADI1, PADI2 or PADI3 in vitro. The deiminated form is degraded by calpain-1/CAPN1 more quickly and into shorter peptides than the intact protein. May be processed by calpain-1/CAPN1 in the uppermost epidermal layers. Expressed in skin, thymus, stomach and placenta, but not detected in heart, brain, liver, lung, bone marrow, small intestine, spleen, prostate, colon, adrenal gland, kidney, pancreas, mammary gland, bladder, thyroid, salivary gland and trachea. Weakly expressed in esophagus, tonsils and testis (at protein level). In the skin, strongly expressed in the upper stratum granulosum and lower stratum corneum, but not detected in the upper stratum corneum (at protein level). In scalp hair follicles, mainly restricted within the granular and cornified cells surrounding the infundibular outer root sheath, with weak expression in central and proximal outer root sheath (at protein level). Tends to be down-regulated in sporiatic lesions compared to non-lesional skin inthe same patients.

It is found in the cytoplasm. The protein resides in the cytoplasmic granule. Its function is as follows. Essential for normal cell-cell adhesion in the cornified cell layers. Important for proper integrity and mechanical strength of the stratum corneum of the epidermis. This chain is Filaggrin-2 (FLG2), found in Homo sapiens (Human).